A 471-amino-acid chain; its full sequence is Trimethyllysine dioxygenase (471 aa).

Fe cation is bound by residues His251 and Asp253. The interval 272 to 302 is disordered; that stretch reads KAAPSRPPPPPPPPPPPSEEKEAAGSAAGEA. Positions 276–288 are enriched in pro residues; it reads SRPPPPPPPPPPP. His430 lines the Fe cation pocket.

This sequence belongs to the gamma-BBH/TMLD family. It depends on Fe(2+) as a cofactor. L-ascorbate is required as a cofactor.

Its subcellular location is the cytoplasm. The catalysed reaction is N(6),N(6),N(6)-trimethyl-L-lysine + 2-oxoglutarate + O2 = (3S)-3-hydroxy-N(6),N(6),N(6)-trimethyl-L-lysine + succinate + CO2. Its pathway is amine and polyamine biosynthesis; carnitine biosynthesis. Converts trimethyllysine (TML) into hydroxytrimethyllysine (HTML). The polypeptide is Trimethyllysine dioxygenase (cbs-1) (Neurospora crassa (strain ATCC 24698 / 74-OR23-1A / CBS 708.71 / DSM 1257 / FGSC 987)).